The following is a 211-amino-acid chain: ATP phosphoribosyltransferase (211 aa).

This sequence belongs to the ATP phosphoribosyltransferase family. Short subfamily. Heteromultimer composed of HisG and HisZ subunits.

The protein resides in the cytoplasm. It carries out the reaction 1-(5-phospho-beta-D-ribosyl)-ATP + diphosphate = 5-phospho-alpha-D-ribose 1-diphosphate + ATP. Its pathway is amino-acid biosynthesis; L-histidine biosynthesis; L-histidine from 5-phospho-alpha-D-ribose 1-diphosphate: step 1/9. Its function is as follows. Catalyzes the condensation of ATP and 5-phosphoribose 1-diphosphate to form N'-(5'-phosphoribosyl)-ATP (PR-ATP). Has a crucial role in the pathway because the rate of histidine biosynthesis seems to be controlled primarily by regulation of HisG enzymatic activity. The sequence is that of ATP phosphoribosyltransferase from Pseudomonas putida (strain GB-1).